The following is a 224-amino-acid chain: MMLITTSHRPTRRTRSFGHDLERVFPNSLYMTRGKKTIQELLMEAYDRGYERLLIINVWKGNPLKMTFIKVHPDDWGYLGYLYLHGVKLQREMGFRGLNPIREDMPLVVTTAKRVGLDHLAFAQVFSELTTGKFVPRGDKSLLSIADKYNTDVLAVIERHPRGIVVNFYRLDVTKERAVGPLINVKIWIMEDGRRWDYKEAFGIKVKPRRKEGEAEEGARKDSH.

One can recognise a Brix domain in the interval 1–196; sequence MMLITTSHRP…IWIMEDGRRW (196 aa).

Functionally, probably involved in the biogenesis of the ribosome. The protein is Probable Brix domain-containing ribosomal biogenesis protein of Pyrococcus abyssi (strain GE5 / Orsay).